The chain runs to 115 residues: Con-Ins G1b (115 aa).

The N-terminal stretch at 1 to 24 is a signal peptide; sequence MTTSFYFLLMALGLLLYVCQSSFG. The propeptide occupies 25 to 29; it reads NQHTR. P34 is subject to 4-hydroxyproline; partial. Intrachain disulfides connect C38-C101, C50-C114, and C100-C105. E41 carries the post-translational modification 4-carboxyglutamate. Positions 52-94 are cleaved as a propeptide — c peptide; that stretch reads RKRNDAGEKRGRASPLWQRRGFLSKLKARAKRNGAFHLPRDGR. Position 98 is a 4-carboxyglutamate (E98). P104 carries the 4-hydroxyproline; partial modification. A 4-carboxyglutamate; partial modification is found at E109. C114 carries the cysteine amide modification.

This sequence belongs to the insulin family. Heterodimer of A and B chains; disulfide-linked. Expressed by the venom gland.

The protein localises to the secreted. Its function is as follows. This venom insulin, from a fish-hunting cone snail, facilitates prey capture by rapidly inducing hypoglycemic shock. It is one of the smallest known insulin found in nature and lacks the C-terminal segment of the B chain that, in human insulin, mediates engagement of the insulin receptor (INSR) and assembly of the hormone's hexameric storage form. Despite lacking this segment, it both binds and activates human insulin receptor (long isoform (HIR-B) of INSR) with only a 10-fold lower potency. In vivo, intraperitoneal injection of this peptide into zebrafish lowers blood glucose with the same potency than human insulin. In addition, when applied to water, this peptide reduces overall locomotor activity of zebrafish larvae, observed as a significant decrease in the percentage of time spent swimming and movement frequency. The polypeptide is Con-Ins G1b (Conus geographus (Geography cone)).